We begin with the raw amino-acid sequence, 665 residues long: Transketolase (665 aa).

Histidine 26 provides a ligand contact to substrate. Thiamine diphosphate contacts are provided by residues histidine 66 and 114–116 (GPL). Residues 94-114 (NSKTPGHPETGETPGVETTTG) form a disordered region. A compositionally biased stretch (low complexity) spans 97 to 114 (TPGHPETGETPGVETTTG). Residue aspartate 155 coordinates Mg(2+). Residues glycine 156 and asparagine 185 each coordinate thiamine diphosphate. The Mg(2+) site is built by asparagine 185 and isoleucine 187. Substrate is bound by residues histidine 261, arginine 358, and serine 385. A thiamine diphosphate-binding site is contributed by histidine 261. Glutamate 411 acts as the Proton donor in catalysis. Position 437 (phenylalanine 437) interacts with thiamine diphosphate. Positions 461, 469, and 520 each coordinate substrate.

Belongs to the transketolase family. As to quaternary structure, homodimer. Mg(2+) is required as a cofactor. Ca(2+) serves as cofactor. It depends on Mn(2+) as a cofactor. Requires Co(2+) as cofactor. The cofactor is thiamine diphosphate.

It carries out the reaction D-sedoheptulose 7-phosphate + D-glyceraldehyde 3-phosphate = aldehydo-D-ribose 5-phosphate + D-xylulose 5-phosphate. Catalyzes the transfer of a two-carbon ketol group from a ketose donor to an aldose acceptor, via a covalent intermediate with the cofactor thiamine pyrophosphate. This Buchnera aphidicola subsp. Acyrthosiphon pisum (strain APS) (Acyrthosiphon pisum symbiotic bacterium) protein is Transketolase (tkt).